Here is a 292-residue protein sequence, read N- to C-terminus: Pantothenate synthetase (292 aa).

ATP is bound at residue 32–39 (MGFLHEGH). The active-site Proton donor is H39. Q63 is a (R)-pantoate binding site. Q63 provides a ligand contact to beta-alanine. Position 150 to 153 (150 to 153 (GEKD)) interacts with ATP. Q156 is a binding site for (R)-pantoate. ATP contacts are provided by residues V179 and 187 to 190 (MSSR).

It belongs to the pantothenate synthetase family. As to quaternary structure, homodimer.

The protein resides in the cytoplasm. It carries out the reaction (R)-pantoate + beta-alanine + ATP = (R)-pantothenate + AMP + diphosphate + H(+). It functions in the pathway cofactor biosynthesis; (R)-pantothenate biosynthesis; (R)-pantothenate from (R)-pantoate and beta-alanine: step 1/1. Catalyzes the condensation of pantoate with beta-alanine in an ATP-dependent reaction via a pantoyl-adenylate intermediate. This chain is Pantothenate synthetase, found in Myxococcus xanthus (strain DK1622).